Consider the following 404-residue polypeptide: MSTEEIIQRTRLLDSEIKIMKSEVLRVTHELQAMRDKIKENSEKIKVNKTLPYLVSNVIELLDVDPNDQEEDGANIDLDSQRKGKCAVIKTSTRQTYFLPVIGLVDAEKLKPGDLVGVNKDSYLILETLPTEYDSRVKAMEVDERPTEQYSDIGGLDKQIQELVEAIVLPMNHKEKFENLGIQPPKGVLMYGPPGTGKTLLARACAAQTKATFLKLAGPQLVQMFIGDGAKLVRDAFSLAKEKAPSIIFIDELDAIGNKRFDSEKAGDREVQRTMLELLNQLDGFQPTTQVKVIAATNRVDILDPALLRSGRLDRKIEFPMPNEEARARIMQIHSRKMNVSPDVNYEELARCTDDFNGAQCKAVCVEAGIIALRRGATELTHEDYMEGILEVQAKKKANLQYYA.

An ATP-binding site is contributed by 192-199; sequence GPPGTGKT.

Belongs to the AAA ATPase family. In terms of assembly, may form a heterodimer with a related family member.

It localises to the cytoplasm. It is found in the nucleus. The 26S proteasome is involved in the ATP-dependent degradation of ubiquitinated proteins. The regulatory (or ATPase) complex confers ATP dependency and substrate specificity to the 26S complex. This chain is 26S proteasome regulatory subunit 6A-B (psmc3-b), found in Xenopus laevis (African clawed frog).